We begin with the raw amino-acid sequence, 898 residues long: Interleukin enhancer-binding factor 3-B (898 aa).

A DZF domain is found at Arg-5–Gly-379. Disordered stretches follow at residues Gln-52–Arg-87, Pro-374–Ala-403, Leu-468–Leu-529, Pro-627–Phe-651, and Gly-711–Ala-799. Residues Glu-61 to Thr-71 show a composition bias toward acidic residues. 2 stretches are compositionally biased toward basic and acidic residues: residues Glu-72–Thr-81 and Pro-374–Pro-384. The Bipartite nuclear localization signal motif lies at Lys-372–Lys-390. Residues Glu-399–Leu-468 enclose the DRBM 1 domain. Positions Glu-474–Glu-483 are enriched in acidic residues. A compositionally biased stretch (polar residues) spans Gln-489–Gln-513. The 67-residue stretch at His-521–Pro-587 folds into the DRBM 2 domain. Positions Arg-637–Phe-651 are enriched in gly residues. Positions Pro-717–Pro-747 are enriched in pro residues. Residues Tyr-749–Gly-782 show a composition bias toward low complexity.

As to quaternary structure, a component of a ybx2/frgy2-containing mRNA-ribonucleoprotein (mRNP) complex. Also a component of the CCAAT box transcription factor (CBTF) complex. In terms of processing, phosphorylated. Phosphorylation affects nuclear translocation. Methylated by protein arginine N-methyltransferase 1 (prmt1b) in the RGG-rich domain. Methylation decreases DNA-binding and thereby decreases transcription of the gata2 gene, but does not regulate dsRNA binding or subcellular localization.

It localises to the nucleus. The protein resides in the cytoplasm. RNA-binding protein that plays an essential role in the biogenesis of circular RNAs (circRNAs) which are produced by back-splicing circularization of pre-mRNAs. Within the nucleus, promotes circRNAs processing by stabilizing the regulatory elements residing in the flanking introns of the circularized exons. Plays thereby a role in the back-splicing of a subset of circRNAs. As a consequence, participates in a wide range of transcriptional and post-transcriptional processes. Binds to poly-U elements and AU-rich elements (AREs) in the 3'-UTR of target mRNAs. Upon viral infection, ILF3 accumulates in the cytoplasm and participates in the innate antiviral response. Mechanistically, ILF3 becomes phosphorylated and activated by the double-stranded RNA-activated protein kinase/PKR which releases ILF3 from cellular mature circRNAs. In turn, unbound ILF3 molecules are able to interact with and thus inhibit viral mRNAs. Has a cytoplasmic role early in development as part of a ribonucleoprotein (mRNP) complex which may regulate mRNA transport and/or translation. Following nuclear localization at the mid-blastula transition, acts as a transcription factor and binds the 5'-CCAAT-3' promoter sequence to regulate transcription of the gata2 gene as a subunit of the CCAAT box transcription factor (CBTF). Its role as an mRNP component negatively regulates its activity as a transcription factor by precluding its nuclear localization. The polypeptide is Interleukin enhancer-binding factor 3-B (ilf3-b) (Xenopus laevis (African clawed frog)).